The sequence spans 256 residues: Ribonuclease 3 (256 aa).

One can recognise an RNase III domain in the interval 3 to 125; sequence LDALQQRLGY…IVGAVFLDAG (123 aa). Glu38 serves as a coordination point for Mg(2+). Asp42 is an active-site residue. Mg(2+) contacts are provided by Asp111 and Glu114. Glu114 is a catalytic residue. A DRBM domain is found at 152–222; sequence DAKTLLQEYL…AKLALDEVQK (71 aa). Positions 229 to 256 are disordered; the sequence is KRSRAERTGKTRKQPVPPDPQLSLRLKE.

Belongs to the ribonuclease III family. Homodimer. Mg(2+) is required as a cofactor.

It localises to the cytoplasm. It catalyses the reaction Endonucleolytic cleavage to 5'-phosphomonoester.. Functionally, digests double-stranded RNA. Involved in the processing of primary rRNA transcript to yield the immediate precursors to the large and small rRNAs (23S and 16S). Processes some mRNAs, and tRNAs when they are encoded in the rRNA operon. Processes pre-crRNA and tracrRNA of type II CRISPR loci if present in the organism. This Cupriavidus pinatubonensis (strain JMP 134 / LMG 1197) (Cupriavidus necator (strain JMP 134)) protein is Ribonuclease 3.